The primary structure comprises 142 residues: SsrA-binding protein (142 aa).

It belongs to the SmpB family.

Its subcellular location is the cytoplasm. In terms of biological role, required for rescue of stalled ribosomes mediated by trans-translation. Binds to transfer-messenger RNA (tmRNA), required for stable association of tmRNA with ribosomes. tmRNA and SmpB together mimic tRNA shape, replacing the anticodon stem-loop with SmpB. tmRNA is encoded by the ssrA gene; the 2 termini fold to resemble tRNA(Ala) and it encodes a 'tag peptide', a short internal open reading frame. During trans-translation Ala-aminoacylated tmRNA acts like a tRNA, entering the A-site of stalled ribosomes, displacing the stalled mRNA. The ribosome then switches to translate the ORF on the tmRNA; the nascent peptide is terminated with the 'tag peptide' encoded by the tmRNA and targeted for degradation. The ribosome is freed to recommence translation, which seems to be the essential function of trans-translation. This Mycoplasma mobile (strain ATCC 43663 / 163K / NCTC 11711) (Mesomycoplasma mobile) protein is SsrA-binding protein.